The chain runs to 582 residues: uncharacterized protein (582 aa).

12 consecutive transmembrane segments (helical) span residues 29–49, 117–137, 155–175, 225–245, 254–274, 287–307, 329–349, 376–396, 432–452, 458–478, 491–511, and 523–543; these read LFIVLLRFIIPSILVSFFAAL, ISAPITVIINALTLLITMGLA, VWATGFITNVIVSIATSMIIV, YVYILAGLFTIQTFNQMYFLL, FISIIPPLANLINILFDYLLI, ATVIGWSLSCLAYVIYNIVLI, YLYLIILIGLASFFRNAALSV, SIFGSVTPISNLMLQSVWGLI, IVYLLFGFGLNNIFLINLFNI, LVVSNLVLRITLVQSIFIALS, IGMAWIASLMQGLFTFAPVFF, and IYLYIWIQPINAILTCIGNWI.

Its subcellular location is the cell membrane. This is an uncharacterized protein from Mycoplasmoides gallisepticum (strain R(low / passage 15 / clone 2)) (Mycoplasma gallisepticum).